A 197-amino-acid chain; its full sequence is Pyridoxal 5'-phosphate synthase subunit PdxT (197 aa).

50–52 (GES) is an L-glutamine binding site. C82 (nucleophile) is an active-site residue. L-glutamine is bound by residues R111 and 140–141 (IR). Residues H176 and E178 each act as charge relay system in the active site.

It belongs to the glutaminase PdxT/SNO family. In the presence of PdxS, forms a dodecamer of heterodimers. Only shows activity in the heterodimer.

It catalyses the reaction aldehydo-D-ribose 5-phosphate + D-glyceraldehyde 3-phosphate + L-glutamine = pyridoxal 5'-phosphate + L-glutamate + phosphate + 3 H2O + H(+). The enzyme catalyses L-glutamine + H2O = L-glutamate + NH4(+). It participates in cofactor biosynthesis; pyridoxal 5'-phosphate biosynthesis. Functionally, catalyzes the hydrolysis of glutamine to glutamate and ammonia as part of the biosynthesis of pyridoxal 5'-phosphate. The resulting ammonia molecule is channeled to the active site of PdxS. The sequence is that of Pyridoxal 5'-phosphate synthase subunit PdxT from Streptomyces griseus subsp. griseus (strain JCM 4626 / CBS 651.72 / NBRC 13350 / KCC S-0626 / ISP 5235).